A 449-amino-acid polypeptide reads, in one-letter code: Putative recombination initiation defects 3 (449 aa).

Residues 21–56 are disordered; that stretch reads LRRSAEPQASQQLRSQQSQQSFSQGPSSSQRGCGGF. A compositionally biased stretch (low complexity) spans 28–50; that stretch reads QASQQLRSQQSQQSFSQGPSSSQ. The Nuclear localization signal signature appears at 437 to 441; it reads RTKRK.

As to quaternary structure, interacts with PRD1; this interaction facilitates a binding to DFO.

It is found in the nucleus. Its function is as follows. Involved in DNA cleavage that forms the double-strand breaks (DSB) that initiate meiotic recombination. In Arabidopsis thaliana (Mouse-ear cress), this protein is Putative recombination initiation defects 3.